A 282-amino-acid polypeptide reads, in one-letter code: Pantothenate synthetase (282 aa).

30-37 lines the ATP pocket; sequence MGYLHEGH. His-37 functions as the Proton donor in the catalytic mechanism. Gln-61 contacts (R)-pantoate. Gln-61 is a beta-alanine binding site. Residue 147–150 coordinates ATP; it reads GMKD. A (R)-pantoate-binding site is contributed by Gln-153. ATP is bound by residues Val-176 and 184–187; that span reads KSSR.

Belongs to the pantothenate synthetase family. In terms of assembly, homodimer.

It is found in the cytoplasm. It carries out the reaction (R)-pantoate + beta-alanine + ATP = (R)-pantothenate + AMP + diphosphate + H(+). Its pathway is cofactor biosynthesis; (R)-pantothenate biosynthesis; (R)-pantothenate from (R)-pantoate and beta-alanine: step 1/1. In terms of biological role, catalyzes the condensation of pantoate with beta-alanine in an ATP-dependent reaction via a pantoyl-adenylate intermediate. This chain is Pantothenate synthetase, found in Bacillus cereus (strain G9842).